The chain runs to 690 residues: Dual specificity protein kinase lkh1 (690 aa).

A disordered region spans residues 39–70 (PNLPPPFSVHQLQSFVPPQPPSSSSPSTTGTV). The Protein kinase domain maps to 362–682 (YTVVRLLGHG…AKEALWHPFF (321 aa)). ATP is bound by residues 368–376 (LGHGTFGKV) and lysine 391. Aspartate 488 acts as the Proton acceptor in catalysis.

Belongs to the protein kinase superfamily. CMGC Ser/Thr protein kinase family. Lammer subfamily. In terms of processing, autophosphorylates on all three types of residues.

The catalysed reaction is L-seryl-[protein] + ATP = O-phospho-L-seryl-[protein] + ADP + H(+). It carries out the reaction L-threonyl-[protein] + ATP = O-phospho-L-threonyl-[protein] + ADP + H(+). It catalyses the reaction L-tyrosyl-[protein] + ATP = O-phospho-L-tyrosyl-[protein] + ADP + H(+). Functionally, protein kinase that may act as a negative regulator of filamentous growth and flocculation. Appears to have a role in normal cell wall and septum formation and in cell separation. May have antagonistic function in the regulation of beta-glucan distribution between the sites for cell wall and septum assembly. The polypeptide is Dual specificity protein kinase lkh1 (lkh1) (Schizosaccharomyces pombe (strain 972 / ATCC 24843) (Fission yeast)).